We begin with the raw amino-acid sequence, 314 residues long: Probable manganese-dependent inorganic pyrophosphatase (314 aa).

6 residues coordinate Mn(2+): H10, D14, D16, D80, H102, and D154.

Belongs to the PPase class C family. Mn(2+) is required as a cofactor.

The protein resides in the cytoplasm. It carries out the reaction diphosphate + H2O = 2 phosphate + H(+). In Lactococcus lactis subsp. lactis (strain IL1403) (Streptococcus lactis), this protein is Probable manganese-dependent inorganic pyrophosphatase (ppaC).